A 132-amino-acid chain; its full sequence is Putative RNase AF_0947 (132 aa).

Residues R91 and H96 contribute to the active site. Residues 91-98 carry the RX(4)HXY motif motif; that stretch reads RNAIAHHY. Y98 is subject to O-di-AMP-tyrosine.

It belongs to the HepT RNase toxin family. As to quaternary structure, homodimer, probably forms a complex with cognate antitoxin AF_0948. In terms of processing, modified by cognate antitoxin AF_0948; probably at least 2 successive AMPylation events occur on Tyr-98.

Functionally, probable toxic component of a putative type VII toxin-antitoxin (TA) system, probably an RNase. Probably neutralized by cognate antitoxin AF_0948. Neutralization may be due to AMPylation by AF_0948. In Archaeoglobus fulgidus (strain ATCC 49558 / DSM 4304 / JCM 9628 / NBRC 100126 / VC-16), this protein is Putative RNase AF_0947.